The sequence spans 418 residues: UDP-glucuronic acid decarboxylase 1 (418 aa).

The Cytoplasmic segment spans residues 1–17 (MMRMSWMVTVINRRMMK). The chain crosses the membrane as a helical; Signal-anchor for type II membrane protein span at residues 18–38 (ILIALALIAYIASVWGTYANM). Over 39–418 (RSIQEHGEMK…RMKKGRPRHN (380 aa)) the chain is Lumenal. 10 residues coordinate NAD(+): G96, F97, V98, D117, N118, F120, T121, G122, D142, and V143. Residues L147 and Y148 each contribute to the UDP-alpha-D-glucuronate site. NAD(+)-binding residues include L157 and S159. K175 contacts UDP-alpha-D-glucuronate. An NAD(+)-binding site is contributed by T176. The UDP-alpha-D-glucuronate site is built by N183, G186, K189, and R190. Residues A198, Y229, and K233 each contribute to the NAD(+) site. Catalysis depends on Y229, which acts as the Proton acceptor. Residues Y243, Q246, and E247 each contribute to the UDP-alpha-D-glucuronate site. NAD(+)-binding residues include T259, H265, and R270. 2 N-linked (GlcNAc...) asparagine glycosylation sites follow: N314 and N383. The segment at 397–418 (ANNQYIPKPKAARMKKGRPRHN) is disordered. Positions 406–418 (KAARMKKGRPRHN) are enriched in basic residues.

Belongs to the NAD(P)-dependent epimerase/dehydratase family. UDP-glucuronic acid decarboxylase subfamily. In terms of assembly, homodimer and homotetramer. NAD(+) serves as cofactor.

It is found in the golgi apparatus. Its subcellular location is the golgi stack membrane. It carries out the reaction UDP-alpha-D-glucuronate + H(+) = UDP-alpha-D-xylose + CO2. It functions in the pathway nucleotide-sugar biosynthesis; UDP-alpha-D-xylose biosynthesis; UDP-alpha-D-xylose from UDP-alpha-D-glucuronate: step 1/1. Functionally, catalyzes the NAD-dependent decarboxylation of UDP-glucuronic acid to UDP-xylose. Necessary for the biosynthesis of the core tetrasaccharide in glycosaminoglycan biosynthesis. Essential during embryogenesis for craniofacial development. The sequence is that of UDP-glucuronic acid decarboxylase 1 from Danio rerio (Zebrafish).